The following is a 335-amino-acid chain: NADH-quinone oxidoreductase subunit H (335 aa).

8 helical membrane passes run 15 to 35 (VVKA…LSFV), 81 to 101 (MIFT…FSII), 114 to 134 (IGLL…LFAG), 154 to 174 (VSYE…VGSF), 187 to 207 (LWFI…GVAV), 238 to 258 (FFVG…TLFF), 270 to 290 (QVPF…FILL), and 307 to 327 (WKFC…IVLY).

Belongs to the complex I subunit 1 family. As to quaternary structure, NDH-1 is composed of 13 different subunits. Subunits NuoA, H, J, K, L, M, N constitute the membrane sector of the complex.

The protein resides in the cell inner membrane. It carries out the reaction a quinone + NADH + 5 H(+)(in) = a quinol + NAD(+) + 4 H(+)(out). In terms of biological role, NDH-1 shuttles electrons from NADH, via FMN and iron-sulfur (Fe-S) centers, to quinones in the respiratory chain. The immediate electron acceptor for the enzyme in this species is believed to be ubiquinone. Couples the redox reaction to proton translocation (for every two electrons transferred, four hydrogen ions are translocated across the cytoplasmic membrane), and thus conserves the redox energy in a proton gradient. This subunit may bind ubiquinone. The chain is NADH-quinone oxidoreductase subunit H from Pseudomonas putida (strain GB-1).